Here is a 120-residue protein sequence, read N- to C-terminus: Large ribosomal subunit protein uL24 (120 aa).

The segment at 1–33 is disordered; sequence MTRQPHKQRNRQERAALHEKQKQVRAPLSPELR. Residues 10 to 22 show a composition bias toward basic and acidic residues; it reads NRQERAALHEKQK.

The protein belongs to the universal ribosomal protein uL24 family. In terms of assembly, part of the 50S ribosomal subunit.

Its function is as follows. One of two assembly initiator proteins, it binds directly to the 5'-end of the 23S rRNA, where it nucleates assembly of the 50S subunit. Functionally, located at the polypeptide exit tunnel on the outside of the subunit. The sequence is that of Large ribosomal subunit protein uL24 from Natronomonas pharaonis (strain ATCC 35678 / DSM 2160 / CIP 103997 / JCM 8858 / NBRC 14720 / NCIMB 2260 / Gabara) (Halobacterium pharaonis).